We begin with the raw amino-acid sequence, 427 residues long: Enolase (427 aa).

Q163 contributes to the (2R)-2-phosphoglycerate binding site. Catalysis depends on E205, which acts as the Proton donor. 3 residues coordinate Mg(2+): D242, E288, and D315. Positions 340, 369, 370, and 391 each coordinate (2R)-2-phosphoglycerate. Catalysis depends on K340, which acts as the Proton acceptor.

It belongs to the enolase family. Mg(2+) serves as cofactor.

It is found in the cytoplasm. The protein resides in the secreted. Its subcellular location is the cell surface. The catalysed reaction is (2R)-2-phosphoglycerate = phosphoenolpyruvate + H2O. It participates in carbohydrate degradation; glycolysis; pyruvate from D-glyceraldehyde 3-phosphate: step 4/5. In terms of biological role, catalyzes the reversible conversion of 2-phosphoglycerate (2-PG) into phosphoenolpyruvate (PEP). It is essential for the degradation of carbohydrates via glycolysis. The chain is Enolase from Cytophaga hutchinsonii (strain ATCC 33406 / DSM 1761 / CIP 103989 / NBRC 15051 / NCIMB 9469 / D465).